The chain runs to 161 residues: Nascent polypeptide-associated complex subunit beta (161 aa).

Disordered regions lie at residues 14 to 41 and 125 to 161; these read LSANNKVGGTRRKLAKKSGTASANKDDS and QNAQAAAPATEGHEAGEKKDNDIPELIEGQSFDADVE. The NAC-A/B domain maps to 37–102; it reads NKDDSKLQAQ…PQEKSLQDLF (66 aa). Residues 125 to 134 show a composition bias toward low complexity; that stretch reads QNAQAAAPAT. A compositionally biased stretch (basic and acidic residues) spans 135-146; sequence EGHEAGEKKDND.

Belongs to the NAC-beta family. As to quaternary structure, part of the nascent polypeptide-associated complex (NAC), consisting of EGD2 and EGD1. NAC associates with ribosomes via EGD1.

It is found in the cytoplasm. Its subcellular location is the nucleus. In terms of biological role, component of the nascent polypeptide-associated complex (NAC), a dynamic component of the ribosomal exit tunnel, protecting the emerging polypeptides from interaction with other cytoplasmic proteins to ensure appropriate nascent protein targeting. The NAC complex also promotes mitochondrial protein import by enhancing productive ribosome interactions with the outer mitochondrial membrane and blocks the inappropriate interaction of ribosomes translating non-secretory nascent polypeptides with translocation sites in the membrane of the endoplasmic reticulum. EGD1 may act as a transcription factor that exert a negative effect on the expression of several genes that are transcribed by RNA polymerase II. The chain is Nascent polypeptide-associated complex subunit beta (EGD1) from Eremothecium gossypii (strain ATCC 10895 / CBS 109.51 / FGSC 9923 / NRRL Y-1056) (Yeast).